Here is a 249-residue protein sequence, read N- to C-terminus: Protein obstructor-E (249 aa).

The signal sequence occupies residues 1–21 (MAKILISALLCVAMFGSMALG). The Chitin-binding type-2 1 domain maps to 22–80 (SPECPTPNGRFASGDQCDSYTECQDGTPVEKLCPDGLLFHQRTKATGECTYAPYSTCKE). A disulfide bridge connects residues Cys-54 and Cys-70. N-linked (GlcNAc...) asparagine glycosylation occurs at Asn-88. Chitin-binding type-2 domains lie at 90–148 (TEEC…SCNA) and 170–227 (VDVS…ECYA). Cystine bridges form between Cys-124–Cys-137 and Cys-203–Cys-216.

Uniformly expressed throughout the cuticle of third instar larva.

The protein localises to the secreted. Its subcellular location is the extracellular space. It is found in the extracellular matrix. Its function is as follows. Chitin-binding protein that is important for the longitudinal contraction and lateral expansion of the larval cuticle during its conversion into the oval-shaped puparium case. Essential for survival to the second instar larval stage. Confers the orientated contractility and expandability of the larval cuticle by regulating the arrangement of chitin and the formation of supracellular ridges on the cuticle of third instar larvae. Essential for determining pupal body shape; required for the orientated shape change of the cuticle during metamorphosis which involves changes in the morphology of the supracellular ridges. Functionally, mainly involved in regulating pupal shape. Mainly involved in larvae survival, possibly by maintaining the normal morphology of the larval hindgut during development. The protein is Protein obstructor-E of Drosophila melanogaster (Fruit fly).